Here is a 644-residue protein sequence, read N- to C-terminus: Chaperone protein DnaK (644 aa).

The residue at position 199 (Thr199) is a Phosphothreonine; by autocatalysis. Residues 589 to 644 (QALAEASHKLAEKMYSQGQGPQAGPGEEPSGQSGGTEKPVEGEVVDAEFEEVKNKK) form a disordered region. The segment covering 604 to 619 (SQGQGPQAGPGEEPSG) has biased composition (low complexity).

The protein belongs to the heat shock protein 70 family.

In terms of biological role, acts as a chaperone. This chain is Chaperone protein DnaK, found in Nitrosospira multiformis (strain ATCC 25196 / NCIMB 11849 / C 71).